A 327-amino-acid chain; its full sequence is GMP reductase (327 aa).

The active-site Thioimidate intermediate is the Cys-175. 204–227 is an NADP(+) binding site; the sequence is IIADGGIRTPGDIAKSIRFGATMV.

It belongs to the IMPDH/GMPR family. GuaC type 2 subfamily.

The catalysed reaction is IMP + NH4(+) + NADP(+) = GMP + NADPH + 2 H(+). Functionally, catalyzes the irreversible NADPH-dependent deamination of GMP to IMP. It functions in the conversion of nucleobase, nucleoside and nucleotide derivatives of G to A nucleotides, and in maintaining the intracellular balance of A and G nucleotides. In Clostridium acetobutylicum (strain ATCC 824 / DSM 792 / JCM 1419 / IAM 19013 / LMG 5710 / NBRC 13948 / NRRL B-527 / VKM B-1787 / 2291 / W), this protein is GMP reductase.